The sequence spans 525 residues: Glutamate synthase large subunit-like protein YerD (525 aa).

The helical transmembrane segment at 4–24 (IIIALIAFIIGIIAIPIVLFA) threads the bilayer.

Belongs to the glutamate synthase family.

The protein resides in the cell membrane. The protein is Glutamate synthase large subunit-like protein YerD (yerD) of Bacillus subtilis (strain 168).